The primary structure comprises 873 residues: DNA mismatch repair protein MutS (873 aa).

Residue 625–632 (GPNMGGKS) participates in ATP binding.

Belongs to the DNA mismatch repair MutS family.

Its function is as follows. This protein is involved in the repair of mismatches in DNA. It is possible that it carries out the mismatch recognition step. This protein has a weak ATPase activity. The sequence is that of DNA mismatch repair protein MutS from Xanthomonas euvesicatoria pv. vesicatoria (strain 85-10) (Xanthomonas campestris pv. vesicatoria).